The sequence spans 88 residues: uncharacterized protein (88 aa).

The dksA C4-type zinc finger occupies 39-63 (CEECGAPIPQARREAIPGVRLCIHC).

This is an uncharacterized protein from Escherichia coli (strain K12).